Consider the following 332-residue polypeptide: DNA-directed RNA polymerase subunit alpha (332 aa).

Residues 1–226 (MLIAQRPTLT…ELFGLARELN (226 aa)) are alpha N-terminal domain (alpha-NTD). The segment at 243-332 (LSSELSMPIE…GYDEDESTTI (90 aa)) is alpha C-terminal domain (alpha-CTD).

Belongs to the RNA polymerase alpha chain family. Homodimer. The RNAP catalytic core consists of 2 alpha, 1 beta, 1 beta' and 1 omega subunit. When a sigma factor is associated with the core the holoenzyme is formed, which can initiate transcription.

It carries out the reaction RNA(n) + a ribonucleoside 5'-triphosphate = RNA(n+1) + diphosphate. DNA-dependent RNA polymerase catalyzes the transcription of DNA into RNA using the four ribonucleoside triphosphates as substrates. The sequence is that of DNA-directed RNA polymerase subunit alpha from Leifsonia xyli subsp. xyli (strain CTCB07).